Consider the following 331-residue polypeptide: Benzylsuccinate synthase activating enzyme (331 aa).

A Radical SAM core domain is found at 15–315 (QDGPGIRTTI…VTIGGIVGIA (301 aa)). Positions 29, 33, 36, 55, 58, 61, 65, 89, 92, 95, and 99 each coordinate [4Fe-4S] cluster. 35–37 (WCH) lines the S-adenosyl-L-methionine pocket. 2 consecutive 4Fe-4S ferredoxin-type domains span residues 46-75 (QEFY…LVRN) and 80-109 (TIVQ…IVGQ). Residues G139, 189 to 191 (DLK), and H263 each bind S-adenosyl-L-methionine.

It belongs to the organic radical-activating enzymes family. The cofactor is [4Fe-4S] cluster.

The enzyme catalyses glycyl-[protein] + reduced [flavodoxin] + S-adenosyl-L-methionine = glycin-2-yl radical-[protein] + semiquinone [flavodoxin] + 5'-deoxyadenosine + L-methionine + H(+). Its pathway is xenobiotic degradation; toluene degradation [regulation]. Functionally, activation of benzylsuccinate synthase under anaerobic conditions by generation of an organic free radical, using S-adenosylmethionine and reduced flavodoxin as cosubstrates to produce 5'-deoxy-adenosine. The protein is Benzylsuccinate synthase activating enzyme (bssD) of Thauera aromatica.